Consider the following 204-residue polypeptide: Tetraspanin-13 (204 aa).

Topologically, residues 1–19 (MVCGGFACSKNCLCALNLL) are cytoplasmic. The chain crosses the membrane as a helical span at residues 20 to 40 (YTLVSLLLIGIAAWGIGFGLI). The Extracellular segment spans residues 41–44 (SSLR). A helical membrane pass occupies residues 45 to 65 (VVGVVIAVGIFLFLIALVGLI). The Cytoplasmic portion of the chain corresponds to 66 to 72 (GAVKHHQ). The helical transmembrane segment at 73 to 93 (VLLFFYMIILLLVFIVQFSVS) threads the bilayer. Over 94–167 (CACLALNQEQ…IGRYAGEVLR (74 aa)) the chain is Extracellular. 2 N-linked (GlcNAc...) asparagine glycosylation sites follow: asparagine 113 and asparagine 137. Serine 143 carries the post-translational modification Phosphoserine. A helical transmembrane segment spans residues 168 to 188 (FVGGIGLFFSFTEILGVWLTY). The Cytoplasmic portion of the chain corresponds to 189-204 (RYRNQKDPRANPSAFL).

It belongs to the tetraspanin (TM4SF) family.

It is found in the membrane. This chain is Tetraspanin-13 (TSPAN13), found in Bos taurus (Bovine).